A 152-amino-acid chain; its full sequence is Endoribonuclease YbeY (152 aa).

Histidine 113, histidine 117, and histidine 123 together coordinate Zn(2+).

This sequence belongs to the endoribonuclease YbeY family. Zn(2+) serves as cofactor.

It is found in the cytoplasm. Its function is as follows. Single strand-specific metallo-endoribonuclease involved in late-stage 70S ribosome quality control and in maturation of the 3' terminus of the 16S rRNA. This is Endoribonuclease YbeY from Pseudoalteromonas atlantica (strain T6c / ATCC BAA-1087).